Reading from the N-terminus, the 426-residue chain is Selenate reductase subunit C (426 aa).

10 consecutive transmembrane segments (helical) span residues 5–25 (LYFT…YIRL), 40–60 (WGLW…SFLL), 78–98 (LALF…LIDL), 119–139 (WEIQ…WFLM), 187–207 (ILGI…GSLF), 223–243 (IIFL…LYSF), 261–281 (LLTL…LIGL), 302–322 (FIFW…LITI), 330–350 (MGLA…ILVI), and 385–405 (VGLI…VPVF).

This sequence belongs to the NrfD family. The complex is composed of three subunits: SrdA, SrdB and SrdC.

It is found in the cell membrane. It carries out the reaction selenite + a quinone + H2O = selenate + a quinol. Component of the respiratory selenate reductase complex, which catalyzes the reduction of selenate to selenite. This subunit probably receives electrons directly from the membrane quinone pool and transfers the electrons to the iron-sulfur clusters of SrdB. May be the membrane anchor protein subunit of the complex. The chain is Selenate reductase subunit C from Mesobacillus selenatarsenatis (strain DSM 18680 / JCM 14380 / FERM P-15431 / SF-1).